Consider the following 205-residue polypeptide: uncharacterized protein (205 aa).

A helical transmembrane segment spans residues 5 to 27; the sequence is IIVLFIIHFIMINENVFIALLHY.

The protein to T.maritima TM1570.

The protein resides in the membrane. This is an uncharacterized protein from Aquifex aeolicus (strain VF5).